We begin with the raw amino-acid sequence, 360 residues long: Endolytic peptidoglycan transglycosylase RlpA (360 aa).

A signal peptide spans 1 to 17 (MRKEWLWVGIASVLLSA). Cys18 is lipidated: N-palmitoyl cysteine. Residue Cys18 is the site of S-diacylglycerol cysteine attachment. Positions 283 to 359 (SAISGGYVVQ…AQQQSFIVAA (77 aa)) constitute an SPOR domain.

Belongs to the RlpA family.

It localises to the cell membrane. Its function is as follows. Lytic transglycosylase with a strong preference for naked glycan strands that lack stem peptides. The sequence is that of Endolytic peptidoglycan transglycosylase RlpA from Yersinia pestis.